The following is a 1224-amino-acid chain: WD repeat-containing protein 11 (1224 aa).

2 WD repeats span residues 59–108 (KHKA…AQCE) and 111–154 (EHAK…KLWK). Phosphoserine is present on residues Ser-205 and Ser-209. Residues 354-393 (KTVRPFSMVCCPVNENAAALVVSDGRVMIWELKSAVCNRN) form a WD 3 repeat. Phosphoserine occurs at positions 402 and 406. 6 WD repeats span residues 471–510 (RMCP…LHKE), 566–605 (NDES…LLRE), 708–745 (GSMG…SRGI), 747–787 (THRS…MVSS), 793–831 (NVTF…ACFR), and 893–940 (SLSN…HSLS).

In terms of assembly, component of the complex WDR11 composed of C17orf75, FAM91A1 and WDR11; FAM91A1 and WDR11 are required for proper location of the complex. Interacts (via the N-terminal and the central portion of the protein) with EMX1. Interacts with GLI3; the interaction associateS EMX1 with GLI3. Interacts with TBC1D23; this interaction may be indirect and recruits TBC1D23 to AP-1-derived vesicles. Ubiquitous.

The protein resides in the cytoplasm. The protein localises to the cytoskeleton. It is found in the cilium basal body. It localises to the nucleus. Its subcellular location is the cilium axoneme. The protein resides in the cytoplasmic vesicle. The protein localises to the golgi apparatus. It is found in the trans-Golgi network. Its function is as follows. Involved in the Hedgehog (Hh) signaling pathway, is essential for normal ciliogenesis. Regulates the proteolytic processing of GLI3 and cooperates with the transcription factor EMX1 in the induction of downstream Hh pathway gene expression and gonadotropin-releasing hormone production. WDR11 complex facilitates the tethering of Adaptor protein-1 complex (AP-1)-derived vesicles. WDR11 complex acts together with TBC1D23 to facilitate the golgin-mediated capture of vesicles generated using AP-1. The sequence is that of WD repeat-containing protein 11 (WDR11) from Homo sapiens (Human).